Consider the following 351-residue polypeptide: Glycerol-1-phosphate dehydrogenase [NAD(P)+] (351 aa).

Residues 97–101 and 119–122 each bind NAD(+); these read GKVID and TSPS. Aspartate 124 contributes to the substrate binding site. NAD(+) is bound at residue serine 128. Aspartate 171 contacts substrate. Positions 171 and 251 each coordinate Zn(2+). Substrate is bound at residue histidine 255. Histidine 267 contacts Zn(2+).

Belongs to the glycerol-1-phosphate dehydrogenase family. As to quaternary structure, homodimer. Zn(2+) is required as a cofactor.

It is found in the cytoplasm. It catalyses the reaction sn-glycerol 1-phosphate + NAD(+) = dihydroxyacetone phosphate + NADH + H(+). The catalysed reaction is sn-glycerol 1-phosphate + NADP(+) = dihydroxyacetone phosphate + NADPH + H(+). It participates in membrane lipid metabolism; glycerophospholipid metabolism. Catalyzes the NAD(P)H-dependent reduction of dihydroxyacetonephosphate (DHAP or glycerone phosphate) to glycerol 1-phosphate (G1P). The G1P thus generated is used as the glycerophosphate backbone of phospholipids in the cellular membranes of Archaea. This chain is Glycerol-1-phosphate dehydrogenase [NAD(P)+], found in Saccharolobus islandicus (strain L.S.2.15 / Lassen #1) (Sulfolobus islandicus).